A 339-amino-acid chain; its full sequence is Erlin-2 (339 aa).

Over 1 to 3 the chain is Cytoplasmic; the sequence is MAQ. Residues 4-24 form a helical membrane-spanning segment; sequence LGAVVAVASSFFCASLFSAVH. Topologically, residues 25–339 are extracellular; the sequence is KIEEGHIGVY…EPLETATKDN (315 aa). N106 is a glycosylation site (N-linked (GlcNAc...) asparagine). The segment at 177 to 309 is interaction with ERLIN1; the sequence is EAIRRNYELM…DIPNMFMDSA (133 aa). At K267 the chain carries N6-acetyllysine.

This sequence belongs to the band 7/mec-2 family. As to quaternary structure, forms a heteromeric complex with ERLIN1. In complex with ERLIN1, interacts with RNF170. Interacts with activated ITPR1, independently of the degree of ITPR1 polyubiquitination. Interacts with SCAP, INSIG1, SREBF1 and SREBF2 under cholesterol sufficiency conditions; indicative for an association with the SCAP-SREBP-INSIG complex. Probably part of an AMFR/gp78 and INSIG1-containing ubiquitin ligase complex involved in ERAD of HMGCR. Interacts with TMUB1; TMUB1 bridges the association with AMFR. Interacts with SYVN1 and RNF139. Interacts with TMEM259. Interacts with TMEM41B. Deubiquitinated by USP25; leading to stabilization.

Its subcellular location is the endoplasmic reticulum membrane. Component of the ERLIN1/ERLIN2 complex which mediates the endoplasmic reticulum-associated degradation (ERAD) of inositol 1,4,5-trisphosphate receptors (IP3Rs) such as ITPR1. Promotes sterol-accelerated ERAD of HMGCR probably implicating an AMFR/gp78-containing ubiquitin ligase complex. Involved in regulation of cellular cholesterol homeostasis by regulation the SREBP signaling pathway. May promote ER retention of the SCAP-SREBF complex. In Rattus norvegicus (Rat), this protein is Erlin-2.